The sequence spans 196 residues: Adenosylcobinamide-phosphate guanylyltransferase (196 aa).

Homodimer.

The catalysed reaction is adenosylcob(III)inamide phosphate + GTP + H(+) = adenosylcob(III)inamide-GDP + diphosphate. It participates in cofactor biosynthesis; adenosylcobalamin biosynthesis. Guanylyltransferase that catalyzes the synthesis of adenosylcobinamide-GDP (AdoCbi-GDP) from adenosylcobinamide-phosphate (AdoCbi-P) and GTP. Is involved in adenosylcobalamin biosynthesis. Binds one GTP per dimer. Cannot use other NTPs or GDP. Does not display AdoCbi kinase activity. Is also able to catalyze the condensation of 2-phospho-L-lactate (LP) with GTP in vitro to form PPi and (2S)-lactyl-2-diphospho-5'-guanosine (LPPG), but is much less efficient than CofC, the presumed enzyme catalyzing this reaction in vivo. The sequence is that of Adenosylcobinamide-phosphate guanylyltransferase (cobY) from Methanocaldococcus jannaschii (strain ATCC 43067 / DSM 2661 / JAL-1 / JCM 10045 / NBRC 100440) (Methanococcus jannaschii).